Here is a 278-residue protein sequence, read N- to C-terminus: Tryptophan synthase alpha chain (278 aa).

Residues Glu-49 and Asp-60 each act as proton acceptor in the active site.

This sequence belongs to the TrpA family. Tetramer of two alpha and two beta chains.

It catalyses the reaction (1S,2R)-1-C-(indol-3-yl)glycerol 3-phosphate + L-serine = D-glyceraldehyde 3-phosphate + L-tryptophan + H2O. The protein operates within amino-acid biosynthesis; L-tryptophan biosynthesis; L-tryptophan from chorismate: step 5/5. Functionally, the alpha subunit is responsible for the aldol cleavage of indoleglycerol phosphate to indole and glyceraldehyde 3-phosphate. This Psychrobacter arcticus (strain DSM 17307 / VKM B-2377 / 273-4) protein is Tryptophan synthase alpha chain.